Consider the following 964-residue polypeptide: MPGKLRVHELAKKLGITSKELLATLKEQGEFVKTASSTIEPPVVKKMQEHYQATGGAKPDTDNKPTPAKPAAKPGAPAPKPGTAQKPTAPTPGAVAAPKPGTAAAKPTPAKPAAPKPTAAKPAPAKPTAPKPATPAFSGPTPGDAAKKAAEDKATPKPGGEAPRPNAMPRPMAKPGPKPGARAPRVANNPFSTGAADRPGPRPGGGGPRPGGGPRPGGAPRPQGGQRSGAPRDGQGGPRGQRPGPGSGGPRPQGGNAAGAASQERQGGGRRPSPAMMPPTPGQMPAKAPGKGGRGGGQGGPGGGSGGFNRGGGGGAGRGGRRGGTAGAFGRPGGAPRRGRKSKRQKRNEYESMQAPNVIGGVRLPDGRGQTLRLARGASLSDFADKIGADAAALVQALFNLGEMVTATASVSDETLMLLGDEMNFKVEVVSPEDEDRELLESFDLQFGEDIGDEQDLAKRPPVVTVMGHVDHGKTRLLDTIRKANVGSGEAGGITQGIGAYQVKVEVEDDLRTITFLDTPGHEAFTAMRARGAKSTDIAVLVVAADDGVMPQTIEAINHAKAADVPIVVAVNKIDKPDASPEKIRGQLTEYGLVPEEYGGDTIFVDISAKQGTNIDELLASVCLTADAELDLVANPDMDAQGVAIEAHLDRGRGPVATVIVQRGTLRVGDSIVVGDTYGRVRRMVDEYGRDVDEAGPSRPVQVQGLNGVPGAGDNLLVVEDDRIARQIANQRNARKRNALAARSRKRVSLEDLDSVLKETSVLNLILKGDNAGSVEALEEALLKIEMDDEVELNIIDRGVGAVTQTNVTLAAASNAVIIAFNVRAEGKATEEANAEGVDIRYYTIIYRAIEEVEAALKGMLKPIYEEREVGKAEIRAIFKASAIGLIAGCMVEEGKVRRNATARIIRDGNVIASNAKIESLRREKDDVTEVSAGYECGMVLSYPDIAVGDKIEVFEMVEVPRDS.

A disordered region spans residues 35–353; the sequence is ASSTIEPPVV…RQKRNEYESM (319 aa). Residues 64-108 are compositionally biased toward low complexity; it reads KPTPAKPAAKPGAPAPKPGTAQKPTAPTPGAVAAPKPGTAAAKPT. The segment covering 124-133 has biased composition (pro residues); it reads PAKPTAPKPA. Residues 145–155 are compositionally biased toward basic and acidic residues; it reads AAKKAAEDKAT. Residues 166–178 are compositionally biased toward pro residues; it reads NAMPRPMAKPGPK. Residues 220–233 show a composition bias toward low complexity; it reads PRPQGGQRSGAPRD. Gly residues-rich tracts occupy residues 234–252 and 290–333; these read GQGG…GPRP and GKGG…GRPG. Basic residues predominate over residues 337–346; it reads RRGRKSKRQK. In terms of domain architecture, tr-type G spans 459 to 631; it reads KRPPVVTVMG…VCLTADAELD (173 aa). Residues 468–475 form a G1 region; it reads GHVDHGKT. Position 468–475 (468–475) interacts with GTP; the sequence is GHVDHGKT. Positions 493-497 are G2; sequence GITQG. The interval 518-521 is G3; sequence DTPG. Residues 518–522 and 572–575 each bind GTP; these read DTPGH and NKID. A G4 region spans residues 572 to 575; that stretch reads NKID. Positions 608–610 are G5; it reads SAK.

This sequence belongs to the TRAFAC class translation factor GTPase superfamily. Classic translation factor GTPase family. IF-2 subfamily.

It is found in the cytoplasm. One of the essential components for the initiation of protein synthesis. Protects formylmethionyl-tRNA from spontaneous hydrolysis and promotes its binding to the 30S ribosomal subunits. Also involved in the hydrolysis of GTP during the formation of the 70S ribosomal complex. The protein is Translation initiation factor IF-2 of Corynebacterium efficiens (strain DSM 44549 / YS-314 / AJ 12310 / JCM 11189 / NBRC 100395).